We begin with the raw amino-acid sequence, 510 residues long: Monocarboxylate transporter 14 (510 aa).

At 1 to 27 (MYTSHEDIGYDFEDGPKDKKTLKPHPN) the chain is on the cytoplasmic side. Transmembrane regions (helical) follow at residues 28 to 48 (IDGGWAWMMVLSSFFVHILIM), 74 to 94 (WVSSLSMGITLIVGPFIGLFI), 103 to 123 (AIIGGLVNSLGWVLSAYAANV), 127 to 147 (FITFGVAAGLGSGMAYLPAVV), 159 to 179 (LAQGLSTTGTGFGTFLMTVLL), and 191 to 209 (AMLIQGAVSLNLCVCGALM). Positions 214-255 (PGKNPNDPGEKDVRGLPAHSTESVKSTGQQGRTEEKDGGLGN) are disordered. Over residues 233–244 (STESVKSTGQQG) the composition is skewed to polar residues. The next 6 helical transmembrane spans lie at 315–335 (MFVAFIFWALFAYSSFVIPFI), 353–373 (FPLTSIIAIVHIFGKVILGVI), 379–399 (ISVWNVFLLANFTLVLSIFIL), 408–428 (LAVICALIGFSSGYFSLMPVV), 443–463 (GIIICANGISALLGPPFAGWI), and 474–494 (FYICGLLYMIGILFLLIQPCI). Over 495–510 (RIIEQSRRKYMDGAHV) the chain is Cytoplasmic.

Belongs to the major facilitator superfamily. Monocarboxylate porter (TC 2.A.1.13) family.

Its subcellular location is the cell membrane. Its function is as follows. Proton-linked monocarboxylate transporter. May catalyze the transport of monocarboxylates across the plasma membrane. This Homo sapiens (Human) protein is Monocarboxylate transporter 14 (SLC16A14).